Consider the following 398-residue polypeptide: Cytochrome b (398 aa).

Transmembrane regions (helical) follow at residues Phe-38–Met-58, Trp-82–Phe-104, Val-119–Val-139, and Phe-185–Ala-205. His-88 and His-102 together coordinate heme b. Residues His-189 and His-203 each coordinate heme b. His-208 serves as a coordination point for a ubiquinone. 4 helical membrane-spanning segments follow: residues Phe-231–Phe-251, Ala-295–Lys-315, Ile-327–Cys-347, and Phe-354–Pro-373.

Belongs to the cytochrome b family. As to quaternary structure, the main subunits of complex b-c1 are: cytochrome b, cytochrome c1 and the Rieske protein. Requires heme b as cofactor.

It is found in the mitochondrion inner membrane. Component of the ubiquinol-cytochrome c reductase complex (complex III or cytochrome b-c1 complex) that is part of the mitochondrial respiratory chain. The b-c1 complex mediates electron transfer from ubiquinol to cytochrome c. Contributes to the generation of a proton gradient across the mitochondrial membrane that is then used for ATP synthesis. The sequence is that of Cytochrome b (MT-CYB) from Triticum aestivum (Wheat).